The chain runs to 374 residues: Homoserine O-acetyltransferase (374 aa).

Residues 45 to 353 (NAILVLHALT…PYGHDAFLIE (309 aa)) form the AB hydrolase-1 domain. S151 serves as the catalytic Nucleophile. R220 contributes to the substrate binding site. Active-site residues include D314 and H347. Position 348 (D348) interacts with substrate.

The protein belongs to the AB hydrolase superfamily. MetX family. As to quaternary structure, homodimer.

The protein localises to the cytoplasm. It carries out the reaction L-homoserine + acetyl-CoA = O-acetyl-L-homoserine + CoA. It participates in amino-acid biosynthesis; L-methionine biosynthesis via de novo pathway; O-acetyl-L-homoserine from L-homoserine: step 1/1. Its function is as follows. Transfers an acetyl group from acetyl-CoA to L-homoserine, forming acetyl-L-homoserine. This Moorella thermoacetica (strain ATCC 39073 / JCM 9320) protein is Homoserine O-acetyltransferase.